Reading from the N-terminus, the 146-residue chain is Aminoglycoside N(6')-acetyltransferase type 1 (146 aa).

Residues 1-146 form the N-acetyltransferase domain; it reads MNIMPISESQ…RVVYFKKNIG (146 aa). Substrate contacts are provided by Trp22, His25, Tyr66, and Glu79. 81–83 is an acetyl-CoA binding site; sequence IFV. Residue Asp115 participates in substrate binding. Position 120 (Asn120) interacts with acetyl-CoA. A substrate-binding site is contributed by Glu136.

In terms of assembly, homodimer.

It catalyses the reaction kanamycin B + acetyl-CoA = N(6')-acetylkanamycin B + CoA + H(+). In terms of biological role, catalyzes the transfer of an acetyl group from acetyl-CoA to the 6'-amino group of aminoglycoside molecules conferring resistance to antibiotics containing the purpurosamine ring including amikacin, kanamycin, tobramycin and netilmicin. This Acinetobacter baumannii protein is Aminoglycoside N(6')-acetyltransferase type 1.